Consider the following 252-residue polypeptide: Small ribosomal subunit protein uS2 (252 aa).

The protein belongs to the universal ribosomal protein uS2 family.

In Ruminiclostridium cellulolyticum (strain ATCC 35319 / DSM 5812 / JCM 6584 / H10) (Clostridium cellulolyticum), this protein is Small ribosomal subunit protein uS2.